We begin with the raw amino-acid sequence, 519 residues long: Pleckstrin homology domain-containing family A member 8 (519 aa).

The region spanning 1–93 (MEGVLYKWTN…WLVALGSAKA (93 aa)) is the PH domain. The residue at position 139 (Thr139) is a Phosphothreonine. Phosphoserine is present on Ser145. A Phosphothreonine modification is found at Thr153. Residues 274–302 (GEDNLGNHDSSLAQPASDSSSSPPESHWE) are disordered. Residues 282 to 298 (DSSLAQPASDSSSSPPE) are compositionally biased toward low complexity. A glycolipid transfer protein homology domain region spans residues 310-519 (TFFSTMNTSF…VHGLESDEVV (210 aa)).

As to quaternary structure, homodimer. Interacts with ARF1; the interaction together with phosphatidylinositol 4-phosphate binding is required for FAPP2 GlcCer transfer ability.

Its subcellular location is the golgi apparatus. The protein resides in the trans-Golgi network membrane. The protein localises to the membrane. Cargo transport protein that is required for apical transport from the trans-Golgi network (TGN). Transports AQP2 from the trans-Golgi network (TGN) to sites of AQP2 phosphorylation. Mediates the non-vesicular transport of glucosylceramide (GlcCer) from the trans-Golgi network (TGN) to the plasma membrane and plays a pivotal role in the synthesis of complex glycosphingolipids. Binding of both phosphatidylinositol 4-phosphate (PIP) and ARF1 are essential for the GlcCer transfer ability. Also required for primary cilium formation, possibly by being involved in the transport of raft lipids to the apical membrane, and for membrane tubulation. The polypeptide is Pleckstrin homology domain-containing family A member 8 (PLEKHA8) (Canis lupus familiaris (Dog)).